The sequence spans 499 residues: Terpentedienyl-diphosphate synthase (499 aa).

Residues Asp284 and Asp286 each contribute to the Mg(2+) site. The short motif at 284 to 287 is the DXDD motif element; sequence DGDD.

It belongs to the terpene synthase family. As to quaternary structure, monomer. The cofactor is Mg(2+).

The catalysed reaction is (2E,6E,10E)-geranylgeranyl diphosphate = terpentedienyl diphosphate. The protein operates within antibiotic biosynthesis. In terms of biological role, involved in the production of the isoprenoid antibiotic terpentecin. Converts geranylgeranyl diphosphate (GGDP) into terpentedienol diphosphate (TDP) by a protonation-initiated cyclization. This Kitasatospora griseola (Streptomyces griseolosporeus) protein is Terpentedienyl-diphosphate synthase (cyc1).